A 416-amino-acid chain; its full sequence is MKFPDNHFSAAIVADTLSVSKRNVETWTQNGKLVPALDPNIHEKPYTKDQLETFEQFSAMFNSSWCEEMAVEPSRSYSLVELFAGAGGLALGLEQAGFKSVLLNEKDKYACATLRANRPNWNVIEDDIENVDFTHLNGKVDLLTGGFPCQPFSYAGKQLGFEDLRGTLVFEMARAIKEIKPKVFLAENVKGLAENDGGRTLSIIIKVLEDLGYKILEKEVYKAIFYKVPQKRERLIIIGVRTDLYDKLAYEKPSPYYKVLTVADALKAGELYDVDVPESTGQLYPERKAEIMSYVPEGGYWRDLPIRIAKEYMMKSFYLGGGKTGMARRLSWDEPSLTLVCTPAQKQTERCHPSESRPLTTREYARIQTFPDDWEFKGSVGQIYKQIGNAVPVNLALAIGKAIIRMLNAAPKDVFE.

The SAM-dependent MTase C5-type domain maps to 77-410 (YSLVELFAGA…KAIIRMLNAA (334 aa)). Cys149 is a catalytic residue.

It belongs to the class I-like SAM-binding methyltransferase superfamily. C5-methyltransferase family.

It catalyses the reaction a 2'-deoxycytidine in DNA + S-adenosyl-L-methionine = a 5-methyl-2'-deoxycytidine in DNA + S-adenosyl-L-homocysteine + H(+). A methylase, recognizes the double-stranded sequence 5'-GGNCC-3', methylates C-4 on both strands, and protects the DNA from cleavage by the PspPI endonuclease. This Psychrobacter sp. (strain TA137) protein is Type II methyltransferase M.PspPI.